Consider the following 857-residue polypeptide: Major vault protein (857 aa).

MVP repeat units follow at residues 18 to 60 (PYYY…ITIP), 62 to 122 (RHYC…KVVQ), 123 to 174 (ANAA…TIIR), 175 to 227 (PNQA…YVLT), 228 to 282 (EKNA…NTLT), 284 to 332 (RQYC…FILG), 333 to 387 (EDEG…IPLD), and 388 to 441 (ENEG…VAER). Residues 434–453 (AKDPVAERSDRRGDRAAPRA) form a disordered region. Over residues 437–453 (PVAERSDRRGDRAAPRA) the composition is skewed to basic and acidic residues. The IQ domain occupies 665-694 (ARHEAERLEQEARGRLERQKIMDEAEAEKS).

As to quaternary structure, the vault ribonucleoprotein particle is a huge (400 A x 670 A) cage structure of 12.9 MDa. It consists of a dimer of half-vaults, with each half-vault comprising 39 identical major vault protein (MVP) chains, PARP4 and one or more vault RNAs (vRNAs). Expressed in embryos, tube feet and coelomocytes (at protein level). Not expressed in sperm cells (at protein level).

The protein resides in the cytoplasm. The protein localises to the nucleus. Required for normal vault structure. Vaults are multi-subunit structures that may act as scaffolds for proteins involved in signal transduction. Vaults may also play a role in nucleo-cytoplasmic transport. The polypeptide is Major vault protein (Strongylocentrotus purpuratus (Purple sea urchin)).